The following is a 1060-amino-acid chain: RNA-binding protein 27 (1060 aa).

3 disordered regions span residues 80–143 (PLEP…DGKW), 160–278 (YDWR…PKRR), and 319–416 (PPPG…PPPL). 2 stretches are compositionally biased toward basic and acidic residues: residues 84–102 (VKPE…KEEV) and 124–143 (SRSE…DGKW). Residues 165–185 (GRSKSRSKSRGLSRSRSRSRG) show a composition bias toward basic residues. Residues 186 to 211 (RSKDRDPNRNVEHRERSKFKSERNDL) are compositionally biased toward basic and acidic residues. 2 stretches are compositionally biased toward low complexity: residues 225 to 235 (SSEQYSSGAQS) and 255 to 268 (SWSN…SSNS). The segment at 273–301 (PPPKRRCRDYDERGFCVLGDLCQFDHGND) adopts a C3H1-type zinc-finger fold. Composition is skewed to pro residues over residues 319 to 356 (PPPG…PGPG) and 371 to 384 (QPPP…PRPP). The segment covering 387–402 (QSSLINSRDQPGTSAV) has biased composition (polar residues). Thr447 bears the Phosphothreonine mark. Arg455 bears the Omega-N-methylarginine mark. Positions 572–594 (LTKKPWLGKQGNNNQSKPGFLRK) are disordered. The region spanning 600 to 674 (TKLEVKKIPQ…RFIRVLWHRE (75 aa)) is the RRM domain. The disordered stretch occupies residues 754–775 (HASTNQSDTSHLLNQTGGSSGE). The span at 755 to 770 (ASTNQSDTSHLLNQTG) shows a compositional bias: polar residues. Residues 810–887 (VQEVLKKKQE…KDELKTSSTV (78 aa)) are a coiled coil. Ser928 carries the post-translational modification Phosphoserine. Positions 943-982 (GRGKTISSQGRGRGRGRGRGRGSLNHMVVDHRPKALPGGG) are disordered. Phosphoserine occurs at positions 1012 and 1020. The tract at residues 1014 to 1060 (HKPKVPSISTETEEEEVKEEETETSDLFLHDDDDEDEDEYESRSWRR) is disordered. Composition is skewed to acidic residues over residues 1024–1037 (ETEE…ETET) and 1044–1053 (DDDDEDEDEY).

The protein localises to the cytoplasm. Its subcellular location is the nucleus speckle. Functionally, may be involved in the turnover of nuclear polyadenylated (pA+) RNA. In Mus musculus (Mouse), this protein is RNA-binding protein 27.